Here is a 225-residue protein sequence, read N- to C-terminus: Small ribosomal subunit protein uS3 (225 aa).

A KH type-2 domain is found at 16 to 85 (VCEYVVKETE…TPQIEVKDVK (70 aa)). A disordered region spans residues 202-225 (EVGTESKADQTDVEGRETGNAEES). The span at 205-225 (TESKADQTDVEGRETGNAEES) shows a compositional bias: basic and acidic residues.

Belongs to the universal ribosomal protein uS3 family. In terms of assembly, part of the 30S ribosomal subunit.

Functionally, binds the lower part of the 30S subunit head. The sequence is that of Small ribosomal subunit protein uS3 from Thermoplasma acidophilum (strain ATCC 25905 / DSM 1728 / JCM 9062 / NBRC 15155 / AMRC-C165).